The chain runs to 24 residues: Erythromycin resistance leader peptide (24 aa).

Residues 1–14 (MSMGIAARPPRAAL) show a composition bias toward low complexity. The segment at 1 to 24 (MSMGIAARPPRAALLPPPSVPRSR) is disordered. Pro residues predominate over residues 15–24 (LPPPSVPRSR).

In terms of biological role, this peptide is involved in the control mechanism of the synthesis of the macrolide-lincosamide-streptogramin B resistance protein. The chain is Erythromycin resistance leader peptide from Streptomyces fradiae (Streptomyces roseoflavus).